Here is a 64-residue protein sequence, read N- to C-terminus: UPF0337 protein SAB0772 (64 aa).

The interval methionine 1 to alanine 40 is disordered. Basic and acidic residues predominate over residues lysine 25–alanine 40.

It belongs to the UPF0337 (CsbD) family.

This chain is UPF0337 protein SAB0772, found in Staphylococcus aureus (strain bovine RF122 / ET3-1).